The primary structure comprises 842 residues: 9-beta-pimara-7,15-diene synthase, chloroplastic (842 aa).

The transit peptide at 1-56 (MASPMEAVARSSLVLAPRRRRALGLLPAAAAAAPFVLDCRRRHNGGMRRPHVSFAC) directs the protein to the chloroplast. Mg(2+) is bound by residues Asp-591, Asp-595, Asn-735, Ser-739, and Glu-743. A DDXXD motif motif is present at residues 591–595 (DDFFD).

This sequence belongs to the terpene synthase family. Mg(2+) is required as a cofactor. In terms of tissue distribution, expressed in roots.

It is found in the plastid. The protein resides in the chloroplast. The catalysed reaction is 9alpha-copalyl diphosphate = 9beta-pimara-7,15-diene + diphosphate. Functionally, involved in the biosynthesis of momilactone A and B phytoalexins. Catalyzes the conversion of syn-copalyl diphosphate to the phytoalexin precursor syn-pimara-7,15-diene. This Oryza sativa subsp. japonica (Rice) protein is 9-beta-pimara-7,15-diene synthase, chloroplastic.